A 321-amino-acid chain; its full sequence is Sideroflexin-3 (321 aa).

The residue at position 1 (M1) is an N-acetylmethionine. 4 helical membrane-spanning segments follow: residues 146–164 (LGTA…ALGL), 174–194 (LVGR…NIPL), 226–246 (FQVV…PPLI), and 266–286 (LQVG…CALF).

It belongs to the sideroflexin family.

Its subcellular location is the mitochondrion membrane. The enzyme catalyses L-serine(in) = L-serine(out). Its function is as follows. Mitochondrial serine transporter that mediates transport of serine into mitochondria, an important step of the one-carbon metabolism pathway. Mitochondrial serine is converted to glycine and formate, which then exits to the cytosol where it is used to generate the charged folates that serve as one-carbon donors. This is Sideroflexin-3 from Homo sapiens (Human).